The primary structure comprises 533 residues: Monogalactosyldiacylglycerol synthase 1, chloroplastic (533 aa).

Positions 155 and 189 each coordinate a 1,2-diacyl-sn-glycero-3-phospho-(1'-sn-glycerol). Histidine 155 serves as a coordination point for UDP. The interval 192–215 (QLPRSYNFLVKHGTLWKMTYYGTS) is required for binding to diacyl glycerol. UDP-binding positions include arginine 324, phenylalanine 413, isoleucine 414, 434 to 438 (GTIAE), and glutamate 456.

Belongs to the glycosyltransferase 28 family. As to quaternary structure, homodimer. As to expression, expressed in roots, stems, leaves, flowers, siliques and seeds.

The protein resides in the plastid. Its subcellular location is the chloroplast inner membrane. It catalyses the reaction a 1,2-diacyl-sn-glycerol + UDP-alpha-D-galactose = a 1,2-diacyl-3-O-(beta-D-galactosyl)-sn-glycerol + UDP + H(+). The enzyme catalyses 1,2-di-(9Z,12Z-octadecadienoyl)-sn-glycerol + UDP-alpha-D-galactose = 1,2-di-(9Z,12Z-octadecadienoyl)-3-beta-D-galactosyl-sn-glycerol + UDP + H(+). It carries out the reaction 1-(9Z-octadecenoyl)-2-hexadecanoyl-sn-glycerol + UDP-alpha-D-galactose = 1-(9Z-octadecenoyl)-2-hexadecanoyl-3-beta-D-galactosyl-sn-glycerol + UDP + H(+). The catalysed reaction is 1,2-di-(9Z-octadecenoyl)-sn-glycerol + UDP-alpha-D-galactose = 1,2-di-(9Z-octadecenoyl)-3-beta-D-galactosyl-sn-glycerol + UDP + H(+). Activated by phosphatidate (PA) and phosphatidylglycerol (PG). Inhibited by galvestine-1. Functionally, involved in the synthesis of the major structural component of photosynthetic membranes. Required for proper thylakoid membrane biogenesis. Does not discriminate between prokaryotic (18:1/16:0) or eukaryotic (18:2/18:2) 1,2-diacylglycerol species, but operates with some preference for the prokaryotic one. Is responsible for most galactolipid synthesis in chloroplasts. Required for the formation of thylakoid membranes and functional photosynthetic electron transport during cotyledons greening in young seedlings. May link galactolipid synthesis with the coordinated transcriptional regulation of chloroplasts and other organelles during cotyledon greening. The sequence is that of Monogalactosyldiacylglycerol synthase 1, chloroplastic from Arabidopsis thaliana (Mouse-ear cress).